The following is a 351-amino-acid chain: L-threonine 3-dehydrogenase (351 aa).

Cys-42 serves as a coordination point for Zn(2+). Residues Thr-44 and His-47 each act as charge relay system in the active site. Zn(2+) contacts are provided by His-67, Glu-68, Cys-97, Cys-100, Cys-103, and Cys-111. NAD(+)-binding positions include Ile-179, Asp-199, Arg-204, 266–268, and 291–292; these read LGL and IT.

It belongs to the zinc-containing alcohol dehydrogenase family. As to quaternary structure, homotetramer. Requires Zn(2+) as cofactor.

It is found in the cytoplasm. It carries out the reaction L-threonine + NAD(+) = (2S)-2-amino-3-oxobutanoate + NADH + H(+). Its pathway is amino-acid degradation; L-threonine degradation via oxydo-reductase pathway; glycine from L-threonine: step 1/2. Its function is as follows. Catalyzes the NAD(+)-dependent oxidation of L-threonine to 2-amino-3-ketobutyrate. The chain is L-threonine 3-dehydrogenase from Symbiobacterium thermophilum (strain DSM 24528 / JCM 14929 / IAM 14863 / T).